The following is an 829-amino-acid chain: pre-rRNA 2'-O-ribose RNA methyltransferase FTSJ3 (829 aa).

Residues Gly-56, Trp-58, Asp-76, Asp-92, and Asp-117 each coordinate S-adenosyl-L-methionine. The active-site Proton acceptor is the Lys-157. Positions 332–367 (ISLSSEEEGDEEESAAETKQASEEEEEREEEEQLNR) are disordered. Ser-333, Ser-335, Ser-336, Ser-345, and Ser-353 each carry phosphoserine. Residues 336–346 (SEEEGDEEESA) show a composition bias toward acidic residues. Residues 354–363 (EEEEEREEEE) show a composition bias toward acidic residues. Arg-389 carries the post-translational modification Citrulline. 2 disordered regions span residues 443–508 (FLSD…PLLV) and 528–634 (DGFS…GFEV). The segment covering 456–473 (DAEDDDDTSLESDLDPEE) has biased composition (acidic residues). Phosphoserine occurs at positions 531 and 544. Residue Lys-570 forms a Glycyl lysine isopeptide (Lys-Gly) (interchain with G-Cter in SUMO2) linkage. Ser-575 bears the Phosphoserine mark. Residues Lys-626 and Lys-642 each participate in a glycyl lysine isopeptide (Lys-Gly) (interchain with G-Cter in SUMO2) cross-link. Ser-659 is subject to Phosphoserine. Residue Lys-661 forms a Glycyl lysine isopeptide (Lys-Gly) (interchain with G-Cter in SUMO2) linkage. Phosphoserine is present on Ser-671. Residue Lys-693 forms a Glycyl lysine isopeptide (Lys-Gly) (interchain with G-Cter in SUMO2) linkage. Residues 722–760 (IKKVAEAKARKKRRMLKKLEQTKKKAEAVVNTVDISERE) are a coiled coil. Residue Arg-766 is modified to Citrulline. A compositionally biased stretch (basic residues) spans 794–804 (VRRPAGVRGHF). The interval 794-829 (VRRPAGVRGHFKVVDSRMKKDQRAQRKEQKRNHRRK) is disordered. Basic and acidic residues predominate over residues 805–820 (KVVDSRMKKDQRAQRK).

Belongs to the class I-like SAM-binding methyltransferase superfamily. RNA methyltransferase RlmE family. SPB1 subfamily. As to quaternary structure, interacts with NIP7. Citrullinated by PADI4.

Its subcellular location is the nucleus. It localises to the nucleolus. The enzyme catalyses a ribonucleotide in rRNA + S-adenosyl-L-methionine = a 2'-O-methylribonucleotide in rRNA + S-adenosyl-L-homocysteine + H(+). In terms of biological role, RNA 2'-O-methyltransferase involved in the processing of the 34S pre-rRNA to 18S rRNA and in 40S ribosomal subunit formation. This chain is pre-rRNA 2'-O-ribose RNA methyltransferase FTSJ3 (Ftsj3), found in Rattus norvegicus (Rat).